The sequence spans 119 residues: Large ribosomal subunit protein bL20 (119 aa).

The protein belongs to the bacterial ribosomal protein bL20 family.

Binds directly to 23S ribosomal RNA and is necessary for the in vitro assembly process of the 50S ribosomal subunit. It is not involved in the protein synthesizing functions of that subunit. The chain is Large ribosomal subunit protein bL20 from Acinetobacter baumannii (strain SDF).